Consider the following 232-residue polypeptide: MKKILIIFSGGQDSTTCLIHYTNIYKEIYCITFDYNQLHKSEIDSARFISNYFNVKKHIFVDLKCLKNLSISSLTDEKISILDNHPLNFSLPSTFVPGRNILFLTLSSIYAFNHQINSIVLGVNEIDFSGYPDCRNAFLKKMNDVVQIGMNCKINFQSPLINLSKAEIWALSDYWNSTQFILNNTVTCYQGIQGKGCGQCQSCILRNDGFNKWKSNPSYYMKKLKEKFNFDN.

8 to 18 (FSGGQDSTTCL) contacts ATP. The Zn(2+) site is built by Cys188, Cys197, Cys200, and Cys203.

Belongs to the QueC family. The cofactor is Zn(2+).

The catalysed reaction is 7-carboxy-7-deazaguanine + NH4(+) + ATP = 7-cyano-7-deazaguanine + ADP + phosphate + H2O + H(+). It functions in the pathway purine metabolism; 7-cyano-7-deazaguanine biosynthesis. Catalyzes the ATP-dependent conversion of 7-carboxy-7-deazaguanine (CDG) to 7-cyano-7-deazaguanine (preQ(0)). This chain is 7-cyano-7-deazaguanine synthase, found in Buchnera aphidicola subsp. Schizaphis graminum (strain Sg).